The sequence spans 125 residues: Biogenesis of lysosome-related organelles complex 1 subunit 1 (125 aa).

Residues 1 to 31 (MLSRLLKEHQAKQNERKELQEKRRREAIAAA) adopt a coiled-coil conformation.

Belongs to the BLOC1S1 family. Component of the biogenesis of lysosome-related organelles complex 1 (BLOC-1) composed of BLOC1S1, BLOC1S2, BLOC1S3, BLOC1S4, BLOC1S5, BLOC1S6, DTNBP1/BLOC1S7 and SNAPIN/BLOC1S8. Octamer composed of one copy each BLOC1S1, BLOC1S2, BLOC1S3, BLOC1S4, BLOC1S5, BLOC1S6, DTNBP1/BLOC1S7 and SNAPIN/BLOC1S8. The BLOC-1 complex associates with the AP-3 protein complex and membrane protein cargos. Interacts with ATP5F1A and NDUFA9; involved in their acetylation on lysine residues. Interacts with KXD1.

It localises to the mitochondrion intermembrane space. Its subcellular location is the mitochondrion matrix. The protein resides in the cytoplasm. The protein localises to the cytosol. It is found in the lysosome membrane. The catalysed reaction is L-lysyl-[protein] + acetyl-CoA = N(6)-acetyl-L-lysyl-[protein] + CoA + H(+). Component of the BLOC-1 complex, a complex that is required for normal biogenesis of lysosome-related organelles (LRO), such as platelet dense granules and melanosomes. In concert with the AP-3 complex, the BLOC-1 complex is required to target membrane protein cargos into vesicles assembled at cell bodies for delivery into neurites and nerve terminals. The BLOC-1 complex, in association with SNARE proteins, is also proposed to be involved in neurite extension. As part of the BORC complex may play a role in lysosomes movement and localization at the cell periphery. The BORC complex is most probably associated with the cytosolic face of lysosomes, may recruit ARL8B and couple lysosomes to microtubule plus-end-directed kinesin motor. In terms of biological role, acts as a protein acetyltransferase. Negatively regulates aerobic respiration through mitochondrial protein lysine-acetylation. May counteract the action of the deacetylase SIRT3 by acetylating and regulating proteins of the mitochondrial respiratory chain including ATP5F1A and NDUFA9. Acts as a regulator of mTORC2 signaling in response to hypotoxic stress by mediating acetylation of RICTOR, thereby protecting RICTOR against ubiquitination and subsequent degradation by the proteasome. The chain is Biogenesis of lysosome-related organelles complex 1 subunit 1 (Bloc1s1) from Mus musculus (Mouse).